A 100-amino-acid chain; its full sequence is MITKEEAQKIAKLARLKFEKDIVEKFSTQLSTIMNMINILNEIDCKDIEPLTSVSNMNARMREDTVTSSDLSNKLFDNVSGNSARLAKEVKYFITPKVVE.

It belongs to the GatC family. Heterotrimer of A, B and C subunits.

The catalysed reaction is L-glutamyl-tRNA(Gln) + L-glutamine + ATP + H2O = L-glutaminyl-tRNA(Gln) + L-glutamate + ADP + phosphate + H(+). It carries out the reaction L-aspartyl-tRNA(Asn) + L-glutamine + ATP + H2O = L-asparaginyl-tRNA(Asn) + L-glutamate + ADP + phosphate + 2 H(+). Allows the formation of correctly charged Asn-tRNA(Asn) or Gln-tRNA(Gln) through the transamidation of misacylated Asp-tRNA(Asn) or Glu-tRNA(Gln) in organisms which lack either or both of asparaginyl-tRNA or glutaminyl-tRNA synthetases. The reaction takes place in the presence of glutamine and ATP through an activated phospho-Asp-tRNA(Asn) or phospho-Glu-tRNA(Gln). The protein is Aspartyl/glutamyl-tRNA(Asn/Gln) amidotransferase subunit C of Rickettsia typhi (strain ATCC VR-144 / Wilmington).